Consider the following 368-residue polypeptide: C2H2 type master regulator of conidiophore development BrlA (368 aa).

A C2H2-type 1; degenerate zinc finger spans residues 268 to 292; the sequence is CKCDYPGCHKAFRRNEHLKRHKQTF. A C2H2-type 2 zinc finger spans residues 300–323; the sequence is FSCEFCGKDQFNRQDNLNNHRKLH. The tract at residues 338–368 is disordered; sequence AAVPIIEQEERSRKRRAPPKSKSADKRVDDY. Residues 359-368 are compositionally biased toward basic and acidic residues; that stretch reads KSADKRVDDY.

Its subcellular location is the nucleus. BrlA, abaA and wetA are pivotal regulators of conidiophore development and conidium maturation. They act individually and together to regulate their own expression and that of numerous other sporulation-specific genes. BrlA, abaA and wetA act together to positively regulate the expression of the Pks1 gene cluster that mediates the biosynthesis of an anthraquinone derivative pigment that contributes to conidial pigmentation that provides protection from UV radiation, heat and cold stress. The chain is C2H2 type master regulator of conidiophore development BrlA from Metarhizium robertsii (strain ARSEF 23 / ATCC MYA-3075) (Metarhizium anisopliae (strain ARSEF 23)).